The chain runs to 118 residues: Large ribosomal subunit protein uL24 (118 aa).

The protein belongs to the universal ribosomal protein uL24 family. As to quaternary structure, part of the 50S ribosomal subunit.

Functionally, one of two assembly initiator proteins, it binds directly to the 5'-end of the 23S rRNA, where it nucleates assembly of the 50S subunit. Its function is as follows. One of the proteins that surrounds the polypeptide exit tunnel on the outside of the subunit. The protein is Large ribosomal subunit protein uL24 of Prochlorococcus marinus (strain NATL2A).